A 320-amino-acid polypeptide reads, in one-letter code: 4-hydroxy-3-methylbut-2-enyl diphosphate reductase 2 (320 aa).

Cysteine 18 serves as a coordination point for [4Fe-4S] cluster. Histidine 47 and histidine 81 together coordinate (2E)-4-hydroxy-3-methylbut-2-enyl diphosphate. Residues histidine 47 and histidine 81 each contribute to the dimethylallyl diphosphate site. Histidine 47 and histidine 81 together coordinate isopentenyl diphosphate. Cysteine 103 lines the [4Fe-4S] cluster pocket. Residue histidine 131 coordinates (2E)-4-hydroxy-3-methylbut-2-enyl diphosphate. Histidine 131 provides a ligand contact to dimethylallyl diphosphate. Residue histidine 131 participates in isopentenyl diphosphate binding. Catalysis depends on glutamate 133, which acts as the Proton donor. Threonine 172 serves as a coordination point for (2E)-4-hydroxy-3-methylbut-2-enyl diphosphate. Cysteine 202 serves as a coordination point for [4Fe-4S] cluster. 4 residues coordinate (2E)-4-hydroxy-3-methylbut-2-enyl diphosphate: serine 230, serine 231, asparagine 232, and serine 275. Dimethylallyl diphosphate contacts are provided by serine 230, serine 231, asparagine 232, and serine 275. Residues serine 230, serine 231, asparagine 232, and serine 275 each contribute to the isopentenyl diphosphate site.

The protein belongs to the IspH family. The cofactor is [4Fe-4S] cluster.

The enzyme catalyses isopentenyl diphosphate + 2 oxidized [2Fe-2S]-[ferredoxin] + H2O = (2E)-4-hydroxy-3-methylbut-2-enyl diphosphate + 2 reduced [2Fe-2S]-[ferredoxin] + 2 H(+). It carries out the reaction dimethylallyl diphosphate + 2 oxidized [2Fe-2S]-[ferredoxin] + H2O = (2E)-4-hydroxy-3-methylbut-2-enyl diphosphate + 2 reduced [2Fe-2S]-[ferredoxin] + 2 H(+). Its pathway is isoprenoid biosynthesis; dimethylallyl diphosphate biosynthesis; dimethylallyl diphosphate from (2E)-4-hydroxy-3-methylbutenyl diphosphate: step 1/1. The protein operates within isoprenoid biosynthesis; isopentenyl diphosphate biosynthesis via DXP pathway; isopentenyl diphosphate from 1-deoxy-D-xylulose 5-phosphate: step 6/6. In terms of biological role, catalyzes the conversion of 1-hydroxy-2-methyl-2-(E)-butenyl 4-diphosphate (HMBPP) into a mixture of isopentenyl diphosphate (IPP) and dimethylallyl diphosphate (DMAPP). Acts in the terminal step of the DOXP/MEP pathway for isoprenoid precursor biosynthesis. The polypeptide is 4-hydroxy-3-methylbut-2-enyl diphosphate reductase 2 (Rhodopseudomonas palustris (strain ATCC BAA-98 / CGA009)).